Reading from the N-terminus, the 452-residue chain is GTPase Der (452 aa).

EngA-type G domains follow at residues 4–169 and 177–352; these read PVVA…PPQD and IQMA…EQHR. Residues 10-17, 57-61, 120-123, 183-190, 230-234, and 295-298 contribute to the GTP site; these read GRPNVGKS, DTGGL, NKCE, DTAGI, and NKWD. Residues 353-438 enclose the KH-like domain; it reads RRVTTAVVNE…PVRLFWRGKQ (86 aa).

It belongs to the TRAFAC class TrmE-Era-EngA-EngB-Septin-like GTPase superfamily. EngA (Der) GTPase family. In terms of assembly, associates with the 50S ribosomal subunit.

Its function is as follows. GTPase that plays an essential role in the late steps of ribosome biogenesis. The protein is GTPase Der of Synechococcus sp. (strain RCC307).